The chain runs to 106 residues: UPF0145 protein Athe_0545 (106 aa).

Belongs to the UPF0145 family.

The sequence is that of UPF0145 protein Athe_0545 from Caldicellulosiruptor bescii (strain ATCC BAA-1888 / DSM 6725 / KCTC 15123 / Z-1320) (Anaerocellum thermophilum).